Consider the following 212-residue polypeptide: Uracil phosphoribosyltransferase (212 aa).

5-phospho-alpha-D-ribose 1-diphosphate-binding positions include arginine 78, arginine 103, and 130-138; that span reads DPMLATGSS. Residues isoleucine 193 and 198–200 contribute to the uracil site; that span reads GDA. Aspartate 199 lines the 5-phospho-alpha-D-ribose 1-diphosphate pocket.

It belongs to the UPRTase family. The cofactor is Mg(2+).

The enzyme catalyses UMP + diphosphate = 5-phospho-alpha-D-ribose 1-diphosphate + uracil. Its pathway is pyrimidine metabolism; UMP biosynthesis via salvage pathway; UMP from uracil: step 1/1. Allosterically activated by GTP. Catalyzes the conversion of uracil and 5-phospho-alpha-D-ribose 1-diphosphate (PRPP) to UMP and diphosphate. The protein is Uracil phosphoribosyltransferase of Pseudomonas fluorescens (strain ATCC BAA-477 / NRRL B-23932 / Pf-5).